A 505-amino-acid polypeptide reads, in one-letter code: Cytochrome P450 monooxygenase efuB (505 aa).

Residues 12–34 (GFWPTVAGTVATYLFYQIVATVY) traverse the membrane as a helical segment. Cys450 serves as a coordination point for heme.

Belongs to the cytochrome P450 family. Heme is required as a cofactor.

Its subcellular location is the membrane. The protein operates within secondary metabolite biosynthesis; terpenoid biosynthesis. Functionally, cytochrome P450 monooxygenase; part of the gene cluster that mediates the biosynthesis of enfumafungin, a glycosylated fernene-type triterpenoid with potent antifungal activity, mediated by its interaction with beta-1,3-glucan synthase and the fungal cell wall. The pathway begins with the terpene cyclase-glycosyl transferase fusion protein that most likely uses 2,3-oxidosqualene as substrate and catalyzes glycosylation immediately after cyclization. The fernene glycoside then could be processed by the desaturase efuI which catalyzes isomerization of a double bond established by efuA to form the core structure. The latter would then undergo a series of hydroxylations in unknown order at C-2, C-19, C-23 and C-25, which would be catalyzed by two of the three cytochrome P450 monooxygenases efuB, efuG or efuH. The hydroxy-group at C-25 becomes oxidized by the dehydrogenase efuE to enable a spontaneous, non-enzymatic hemiacetal formation with C-23. After hydroxylation at C-2, acetylation by the acetyltransferase efuC takes place. The final steps in enfumafungin biosynthesis require expansion of the 5-membered ring by lactonization via a Baeyer-Villiger reaction mediated by one of the BGC's cytochrome P450 monooxygenases (efuB, efuG or efuH) followed by ring cleavage. This type of reaction would establish a double bond between C-20 and C-21 which could be reduced by the reductase efuL to form the final product. This is Cytochrome P450 monooxygenase efuB from Hormonema carpetanum.